The primary structure comprises 364 residues: Homeobox protein KNOX3 (364 aa).

The interval 13-49 is disordered; it reads TAHGQHHSQLPWGSSPLSAVISPPPQQQQQHQQQSAG. The segment covering 19–29 has biased composition (polar residues); sequence HSQLPWGSSPL. An ELK domain is found at 246 to 266; that stretch reads ELKHHLLKKYSGYLSSLKQEL. Positions 267 to 330 form a DNA-binding region, homeobox; TALE-type; that stretch reads SKKKKKGKLP…NQRKRHWKPT (64 aa).

It belongs to the TALE/KNOX homeobox family. In terms of assembly, binds DNA as a monomer. The unit of inflorescence is the spikelet, which bears a fertile tract, the lemma, and the floret consisting of palea, two lodicules, three stamens and the pistil. The lemma is completed by the awn, an appendage homologous to the laminae of normal leaves. Expressed in the inflorescences and lemmas and at lower levels, in palea and vascular bundles.

It is found in the nucleus. May play a role in meristem formation and/or maintenance. Overexpression causes the hooded phenotype characterized by the appearance of an extra flower of inverse polarity on the lemma. Binds to the DNA sequence 5'-TGAC-3'. This chain is Homeobox protein KNOX3 (KNOX3), found in Hordeum vulgare (Barley).